Reading from the N-terminus, the 143-residue chain is Large ribosomal subunit protein uL11 (143 aa).

Belongs to the universal ribosomal protein uL11 family. In terms of assembly, part of the ribosomal stalk of the 50S ribosomal subunit. Interacts with L10 and the large rRNA to form the base of the stalk. L10 forms an elongated spine to which L12 dimers bind in a sequential fashion forming a multimeric L10(L12)X complex. One or more lysine residues are methylated.

Its function is as follows. Forms part of the ribosomal stalk which helps the ribosome interact with GTP-bound translation factors. The protein is Large ribosomal subunit protein uL11 of Stutzerimonas stutzeri (strain A1501) (Pseudomonas stutzeri).